The following is a 2035-amino-acid chain: Host cell factor 1 (2035 aa).

Alanine 2 is subject to N-acetylalanine. Phosphoserine is present on serine 6. 5 Kelch repeats span residues 44-89, 93-140, 148-194, 217-265, and 266-313; these read LIVV…GFVC, RLLV…RLGH, KCYL…ITYG, KLVI…TIGN, and KMYV…LMDT. Residues lysine 105, lysine 163, and lysine 244 each participate in a glycyl lysine isopeptide (Lys-Gly) (interchain with G-Cter in ubiquitin) cross-link. Lysine 282 participates in a covalent cross-link: Glycyl lysine isopeptide (Lys-Gly) (interchain with G-Cter in SUMO2). Position 288 is an N6-acetyllysine (lysine 288). Lysine 363 is covalently cross-linked (Glycyl lysine isopeptide (Lys-Gly) (interchain with G-Cter in ubiquitin)). The Fibronectin type-III 1 domain maps to 366–466; that stretch reads PPARVQLVRA…TTTTIQVLPT (101 aa). A disordered region spans residues 407–434; the sequence is ATATSPTPNPVPSVPANPPKSPAPAAAA. Serine 411 carries the post-translational modification Phosphoserine. Pro residues predominate over residues 413–428; the sequence is TPNPVPSVPANPPKSP. Positions 500–550 are required for interaction with OGT; the sequence is LVTMRPASQAGKAPVTVTSLPAGVRMVVPTQSAQGTVIGSSPQMSGMAALA. 2 positions are modified to omega-N-methylarginine: arginine 504 and arginine 524. Residues serine 598, serine 666, and serine 669 each carry the phosphoserine modification. The interaction with SIN3A stretch occupies residues 610–722; the sequence is LKTAAAQVGT…KGPLPAGTIL (113 aa). Residues 750 to 902 are interaction with ZBTB17; the sequence is ILGISSVSPS…SLAGAGGHST (153 aa). Lysine 813 carries the post-translational modification N6-acetyllysine. The tract at residues 813 to 912 is interaction with GABP2; it reads KIITAVPKIA…SASLATPITT (100 aa). 3 HCF repeat repeats span residues 1010-1035, 1072-1097, and 1101-1126; these read TLVC…TVVA, VRVC…ATSN, and QHGC…AMSS. Residues 1158-1183 form an HCF repeat 4; degenerate repeat; the sequence is AAQGSKSQCQTRQTSATSTTMTVMAT. The residue at position 1205 (serine 1205) is a Phosphoserine. Residue arginine 1219 is modified to Omega-N-methylarginine. Serine 1224 is subject to Phosphoserine. 2 HCF repeat repeats span residues 1286–1311 and 1314–1339; these read TQVC…SNAG and QRVC…ATSN. Disordered regions lie at residues 1292–1371, 1435–1470, and 1487–1515; these read PPCE…TMSV, TVTS…TSSS, and VTQS…QQLP. 3 stretches are compositionally biased toward low complexity: residues 1299-1312, 1329-1339, and 1362-1371; these read TGTT…NAGS, TTHTATTATSN, and TTSTGTTMSV. The stretch at 1349-1374 is one HCF repeat 7; degenerate repeat; the sequence is QQPPAGRPCETHQTTSTGTTMSVSVG. The stretch at 1414-1439 is one HCF repeat 8 repeat; that stretch reads QRVCSNPPCETHETGTTHTATTVTSN. Threonine 1491 carries the phosphothreonine modification. Residues 1493–1502 show a composition bias toward pro residues; sequence VPGPSVPPPE. Phosphoserine is present on residues serine 1497, serine 1507, and serine 1771. 2 Fibronectin type-III domains span residues 1797-1888 and 1890-2006; these read LPPP…TCLP and FPGA…TSKD. Glycyl lysine isopeptide (Lys-Gly) (interchain with G-Cter in ubiquitin) cross-links involve residues lysine 1807 and lysine 1808. Serine 1838 carries the post-translational modification Phosphoserine. Positions 1994–2035 are disordered; sequence ATQVRWLQETSKDSSGTKPANKRPMSSPEMKSAPKKSKADGQ. At lysine 2005 the chain carries N6-acetyllysine. Lysine 2024 participates in a covalent cross-link: Glycyl lysine isopeptide (Lys-Gly) (interchain with G-Cter in SUMO2).

Composed predominantly of six polypeptides ranging from 110 to 150 kDa and a minor 300 kDa polypeptide. The majority of N- and C-terminal cleavage products remain tightly, albeit non-covalently, associated. Interacts with POU2F1, CREB3, ZBTB17, EGR2, E2F4, CREBZF, SP1, GABP2, Sin3 HDAC complex (SIN3A, HDAC1, HDAC2, SUDS3), SAP30, SIN3B and FHL2. Component of a MLL1 complex, composed of at least the core components KMT2A/MLL1, ASH2L, HCFC1, WDR5 and RBBP5, as well as the facultative components BACC1, CHD8, DPY30, E2F6, HCFC2, HSP70, INO80C, KANSL1, LAS1L, MAX, MCRS1, MEN1, MGA, KAT8, PELP1, PHF20, PRP31, RING2, RUVBL1, RUVBL2, SENP3, TAF1, TAF4, TAF6, TAF7, TAF9 and TEX10. Component of a THAP1/THAP3-HCFC1-OGT complex that is required for the regulation of the transcriptional activity of RRM1. Interacts directly with THAP3 (via its HBM). Interacts (via the Kelch-repeat domain) with THAP1 (via the HBM); the interaction recruits HCHC1 to the RRM1. Interacts with THAP7 and THAP11 (via the HMB). Interacts directly with OGT; the interaction, which requires the HCFC1 cleavage site domain, glycosylates and promotes the proteolytic processing of HCFC1, retains OGT in the nucleus and impacts the expression of herpes simplex virus immediate early viral genes. Component of the SET1 complex, at least composed of the catalytic subunit (SETD1A or SETD1B), WDR5, WDR82, RBBP5, ASH2L, CXXC1, HCFC1 and DPY30. Component of the NSL complex at least composed of MOF/KAT8, KANSL1, KANSL2, KANSL3, MCRS1, PHF20, OGT1/OGT, WDR5 and HCFC1. Component of a complex at least composed of ZNF335, HCFC1, CCAR2, EMSY, MKI67, RBBP5, ASH2L and WDR5; the complex is formed as a result of interactions between components of a nuclear receptor-mediated transcription complex and a histone methylation complex. Within the complex interacts with ZNF335. Interacts with TET2 and TET3. Interacts with HCFC1R1. Interacts with THAP11. Interacts (via Kelch domain) with KMT2E/MLL5 isoform 3 (via HBM motif). Interacts with E2F1. Accessory scaffold component of the polycomb repressive deubiquitinase (PR-DUB) complex, at least composed of BAP1, one of ASXL1, ASXL2 or (probably) ASXL3 and one of MBD5 or MBD6; the PR-DUB core associates with a number of accessory proteins, including FOXK1, FOXK2, KDM1B, HCFC1, YY1 and OGT. Interacts with YY1 (via Gly-rich region); the interaction is direct. Interacts with BAP1 (via HBM-like motif). As to quaternary structure, (Microbial infection) Associates with the VP16-induced complex; binding to HCFC1 activates the viral transcriptional activator VP16 for association with POU2F1, to form a multiprotein-DNA complex responsible for activating transcription of the viral immediate early genes. Interacts with the viral transactivator protein VP16. Post-translationally, proteolytically cleaved at one or several PPCE--THET sites within the HCF repeats. Further cleavage of the primary N- and C-terminal chains results in a 'trimming' and accumulation of the smaller chains. Cleavage is promoted by O-glycosylation. In terms of processing, O-glycosylated. GlcNAcylation by OGT promotes proteolytic processing. Ubiquitinated. Lys-1807 and Lys-1808 are ubiquitinated both via 'Lys-48'- and 'Lys-63'-linked polyubiquitin chains. BAP1 mediated deubiquitination of 'Lys-48'-linked polyubiquitin chains; deubiquitination by BAP1 does not seem to stabilize the protein. Highly expressed in fetal tissues and the adult kidney. Present in all tissues tested.

It localises to the cytoplasm. It is found in the nucleus. Transcriptional coregulator. Serves as a scaffold protein, bridging interactions between transcription factors, including THAP11 and ZNF143, and transcriptional coregulators. Involved in control of the cell cycle. Also antagonizes transactivation by ZBTB17 and GABP2; represses ZBTB17 activation of the p15(INK4b) promoter and inhibits its ability to recruit p300. Coactivator for EGR2 and GABP2. Tethers the chromatin modifying Set1/Ash2 histone H3 'Lys-4' methyltransferase (H3K4me) and Sin3 histone deacetylase (HDAC) complexes (involved in the activation and repression of transcription, respectively) together. Component of a THAP1/THAP3-HCFC1-OGT complex that is required for the regulation of the transcriptional activity of RRM1. As part of the NSL complex it may be involved in acetylation of nucleosomal histone H4 on several lysine residues. Recruits KMT2E/MLL5 to E2F1 responsive promoters promoting transcriptional activation and thereby facilitates G1 to S phase transition. Modulates expression of homeobox protein PDX1, perhaps acting in concert with transcription factor E2F1, thereby regulating pancreatic beta-cell growth and glucose-stimulated insulin secretion. May negatively modulate transcriptional activity of FOXO3. In terms of biological role, (Microbial infection) In case of human herpes simplex virus (HSV) infection, HCFC1 forms a multiprotein-DNA complex with the viral transactivator protein VP16 and POU2F1 thereby enabling the transcription of the viral immediate early genes. This Homo sapiens (Human) protein is Host cell factor 1.